The primary structure comprises 494 residues: MESERAAYAFLPQTPIKSTDAHLVEFSEAMRAVAKTLRQVAEGKAAAQAEAAEWKRKYELEKAVKAHRHNTVTKGCSNCDKEKLEQLASQLTLETTSVDPTSCCGNHEICSRQILQDECPGTNKISHDKIAARKAPFKLSWGCNGDNNGQHKHDFVSFEKGDITTAERSNKQILLKWESPPQTVLFVTKPNSNSVHALCAEMVRWLKEHNNINIFVEPRVSKELVTEDSYFNFIQTWDNDEEMKTLHTKVDLIVTLGGDGTVLWAASLFKGPVPPVVAFSLGSLGFMTPFSSELYRECLDHVLKRPFGITLRSRLQCHVIYDSAKNEVDTEEPILVLNEVTIDRGMSSYLTYLECYCDSSFVTRVQGDGLIISTTSGSTAYSLAAGGSMVHPQVPGILFTPICPHSLSFRPLILPEYVTLRVQVPINSRGQAWASFDGKGRKQLGPGDALICSISPWPVPTACLVDSTTDFLRSIHEGLHWNLRKSQSFDGPVA.

Belongs to the NAD kinase family.

It carries out the reaction NAD(+) + ATP = ADP + NADP(+) + H(+). The chain is Putative NAD kinase 3 from Oryza sativa subsp. japonica (Rice).